Reading from the N-terminus, the 802-residue chain is Pyrophosphate-energized membrane proton pump 2 (802 aa).

6 helical membrane passes run 45–65 (VLSIILLFCFGAIFYMGASTS), 66–86 (PIIVFVFTVCIISFLLSIYLT), 118–138 (YSTISKMAILLAFVILCIYLF), 160–180 (VAAFLLGALCSGIAGYVGMWV), 206–226 (AGGFSALVVVGMAVIGIAILY), and 246–266 (LPLLLVGYGFGASFVALFAQL). K273 contributes to the substrate binding site. Mg(2+)-binding residues include D276, D280, and D306. 5 helical membrane-spanning segments follow: residues 348–368 (FILFPLVVHSFDLIISSIGIL), 386–406 (MAVLQKGYSLTIILAVITFGA), 421–441 (WFNFALCGLVGIITAYIFVWI), 468–488 (IIAGVSLGLESTALPVLTISV), and 511–531 (GGLFGTAVATMGMLSTAAYVL). Residues D541 and N568 each coordinate Mg(2+). 4 helical membrane passes run 577–597 (FAIGSAALASFLLFSAYMDEV), 615–635 (VFVGGLLGAMLIFLFSAWACA), 686–706 (GALAIASPIVVGLVFRILGYY), and 716–736 (VVASMLMFATVCGILMALFLN). Residues D743 and D773 each coordinate Mg(2+). A substrate-binding site is contributed by K776. A helical membrane pass occupies residues 782 to 802 (SIHVLIKMLATITLVMAPVFL).

It belongs to the H(+)-translocating pyrophosphatase (TC 3.A.10) family. K(+)-insensitive subfamily. As to quaternary structure, monomer. In terms of tissue distribution, ubiquitous. Mostly expressed in cotyledons, roots and flowers. Especially high levels in trichomes, sepals and stamen filaments.

The protein resides in the golgi apparatus membrane. It carries out the reaction diphosphate + H2O + H(+)(in) = 2 phosphate + 2 H(+)(out). With respect to regulation, activated by Mg(+) but not by K(+). Inhibited by Ca(2+). Functionally, pyrophosphatase active in both inorganic pyrophosphate hydrolysis and H(+) translocation. The chain is Pyrophosphate-energized membrane proton pump 2 (AVPL1) from Arabidopsis thaliana (Mouse-ear cress).